The sequence spans 372 residues: M protein, serotype 2.2 (372 aa).

Positions 1-41 (MARQQTKKNYSLRKLKTGTASVAVALTVLGAGFANQTEVRA) are cleaved as a signal peptide. C repeat units lie at residues 124–158 (AKTTKENEISEASRKGLSRDLEASRTAKKELEAKH), 166–200 (KKLTEGNQVSEASRKGLSNDLEASRAAKKELEAKY), and 215–249 (QKLEADYQVSETSRKGLSRDLEASREANKKVTSEL). Composition is skewed to basic and acidic residues over residues 125–169 (KTTK…KKLT), 226–246 (TSRKGLSRDLEASREANKKVT), and 260–274 (EESKKLSEKEKAELQ). Disordered stretches follow at residues 125-191 (KTTK…ASRA) and 211-274 (EAKH…AELQ). D repeat units lie at residues 275 to 280 (AKLDAQ), 281 to 286 (GKALKE), 289 to 294 (AKQTEE), and 296 to 301 (AKLRAE). Residues 295–304 (LAKLRAEKAA) show a composition bias toward basic and acidic residues. The disordered stretch occupies residues 295-344 (LAKLRAEKAAGSKTPATKPANKERSGRAAQTATRPSQNKGMRSQLPSTGE). Residues 322 to 341 (AAQTATRPSQNKGMRSQLPS) are compositionally biased toward polar residues. An LPXTG sorting signal motif is present at residues 339 to 343 (LPSTG). Thr-342 is subject to Pentaglycyl murein peptidoglycan amidated threonine. Residues 343–372 (GEAANPFFTAAAATVMVSAGMLALKRKEEN) constitute a propeptide, removed by sortase.

It belongs to the M protein family.

The protein localises to the secreted. Its subcellular location is the cell wall. Its function is as follows. This protein is one of the different antigenic serotypes of protein M. Protein M is closely associated with virulence of the bacterium and can render the organism resistant to phagocytosis. This Streptococcus pyogenes protein is M protein, serotype 2.2 (emmL2.2).